The chain runs to 347 residues: GMP reductase (347 aa).

Ala-108–Ala-131 lines the NADP(+) pocket. Residues Gly-181 and Gly-183 each contribute to the K(+) site. Cys-186 functions as the Thioimidate intermediate in the catalytic mechanism. Ile-216 to Val-239 is a binding site for NADP(+).

The protein belongs to the IMPDH/GMPR family. GuaC type 1 subfamily. Homotetramer.

It carries out the reaction IMP + NH4(+) + NADP(+) = GMP + NADPH + 2 H(+). Functionally, catalyzes the irreversible NADPH-dependent deamination of GMP to IMP. It functions in the conversion of nucleobase, nucleoside and nucleotide derivatives of G to A nucleotides, and in maintaining the intracellular balance of A and G nucleotides. The protein is GMP reductase of Escherichia coli O81 (strain ED1a).